Consider the following 129-residue polypeptide: Bacteriohemerythrin (129 aa).

Positions 19, 59, 63, 78, 82, 119, and 124 each coordinate Fe cation.

This sequence belongs to the hemerythrin family. As to quaternary structure, monomer.

Its function is as follows. Oxygen-binding protein. May be involved in a storage mechanism or for delivery to oxygen-requiring enzymes. The oxygen-binding site contains two iron atoms. This chain is Bacteriohemerythrin, found in Clostridium acetobutylicum (strain ATCC 824 / DSM 792 / JCM 1419 / IAM 19013 / LMG 5710 / NBRC 13948 / NRRL B-527 / VKM B-1787 / 2291 / W).